The chain runs to 671 residues: Diguanylate cyclase DgcP (671 aa).

Disordered stretches follow at residues 204 to 223 (AAPS…PPQP) and 278 to 298 (EAGA…PEAP). Residue D549 coordinates Mg(2+). The substrate site is built by N557, H562, and D566. E592 serves as a coordination point for Mg(2+). E592 is an active-site residue.

Homodimer. The cofactor is Mg(2+).

It is found in the cell inner membrane. It carries out the reaction 2 GTP = 3',3'-c-di-GMP + 2 diphosphate. It participates in purine metabolism; 3',5'-cyclic di-GMP biosynthesis. Catalyzes the synthesis of cyclic-di-GMP (c-di-GMP) via the condensation of 2 GTP molecules. Cyclic-di-GMP is a second messenger which controls cell surface-associated traits in bacteria. Localizes at the cell poles through interaction with FimV where it increases the local pools of c-di-GMP. This chain is Diguanylate cyclase DgcP (dgcP), found in Pseudomonas aeruginosa (strain ATCC 15692 / DSM 22644 / CIP 104116 / JCM 14847 / LMG 12228 / 1C / PRS 101 / PAO1).